The sequence spans 328 residues: Gonadotropin-releasing hormone receptor (328 aa).

The Extracellular portion of the chain corresponds to 1–38 (MANRAYLEQKQTQCSIINSSFSMTHRDLPTLTLSGKIR). A glycan (N-linked (GlcNAc...) asparagine) is linked at Asn-18. Residues 39–58 (VMVTFFLFLVSTAFNASFLM) form a helical membrane-spanning segment. The Cytoplasmic portion of the chain corresponds to 59–77 (KLQRQTQKKEEVKKLTRMK). Residues 78 to 97 (VLLKHLTLANLLETVIVMPL) traverse the membrane as a helical segment. At 98-115 (DGIWNVTVQWYAGEFLCK) the chain is on the extracellular side. N-linked (GlcNAc...) asparagine glycosylation is present at Asn-102. Residues Cys-114 and Cys-196 are joined by a disulfide bond. A helical membrane pass occupies residues 116 to 137 (ALSYLKLFSMYAPAFMMVVISL). At 138 to 164 (DRFLAITRPLAVKSNTKVGQSLIAVAW) the chain is on the cytoplasmic side. The helical transmembrane segment at 165 to 184 (FLSIVLAGPQLYIFRMIYVE) threads the bilayer. The Extracellular portion of the chain corresponds to 185-212 (DISGQTGNFSQCVTHCSFPEWWQEAFYN). An N-linked (GlcNAc...) asparagine glycan is attached at Asn-192. The chain crosses the membrane as a helical span at residues 213 to 232 (LLTFSCLFIGPLLIMLVCNA). At 233–281 (KIIFTLTQVLHQDPHELQLNRSKNNIPRARLRTLKMTVAFATLFTICWT) the chain is on the cytoplasmic side. Residues 282–300 (PYYVLGIWYWFDPEMLNRV) traverse the membrane as a helical segment. Over 301–306 (SDPVNH) the chain is Extracellular. Residues 307–326 (FFFLFGLLNPCFDPLIYGYF) traverse the membrane as a helical segment. Topologically, residues 327–328 (SL) are cytoplasmic.

This sequence belongs to the G-protein coupled receptor 1 family.

It localises to the cell membrane. Receptor for gonadotropin releasing hormone (GnRH) that mediates the action of GnRH to stimulate the secretion of the gonadotropic hormones luteinizing hormone (LH) and follicle-stimulating hormone (FSH). This receptor mediates its action by association with G-proteins that activate a phosphatidylinositol-calcium second messenger system. In Trichosurus vulpecula (Brush-tailed possum), this protein is Gonadotropin-releasing hormone receptor (GNRHR).